Reading from the N-terminus, the 465-residue chain is 3-isopropylmalate dehydratase large subunit (465 aa).

Residues Cys-346, Cys-406, and Cys-409 each contribute to the [4Fe-4S] cluster site.

This sequence belongs to the aconitase/IPM isomerase family. LeuC type 1 subfamily. As to quaternary structure, heterodimer of LeuC and LeuD. It depends on [4Fe-4S] cluster as a cofactor.

The catalysed reaction is (2R,3S)-3-isopropylmalate = (2S)-2-isopropylmalate. It participates in amino-acid biosynthesis; L-leucine biosynthesis; L-leucine from 3-methyl-2-oxobutanoate: step 2/4. Its function is as follows. Catalyzes the isomerization between 2-isopropylmalate and 3-isopropylmalate, via the formation of 2-isopropylmaleate. This is 3-isopropylmalate dehydratase large subunit from Psychromonas ingrahamii (strain DSM 17664 / CCUG 51855 / 37).